The following is a 396-amino-acid chain: L-lactate dehydrogenase (396 aa).

The region spanning 1–380 (MIISAASDYR…SGDSLVQELG (380 aa)) is the FMN hydroxy acid dehydrogenase domain. Position 24 (Y24) interacts with substrate. 2 residues coordinate FMN: S106 and Q127. Y129 is a substrate binding site. T155 contacts FMN. A substrate-binding site is contributed by R164. FMN is bound at residue K251. Residue H275 is the Proton acceptor of the active site. R278 serves as a coordination point for substrate. Position 306–330 (306–330 (DSGIRNGLDVVRMIALGADTVLLGR)) interacts with FMN.

The protein belongs to the FMN-dependent alpha-hydroxy acid dehydrogenase family. The cofactor is FMN.

The protein resides in the cell inner membrane. The enzyme catalyses (S)-lactate + A = pyruvate + AH2. Catalyzes the conversion of L-lactate to pyruvate. Is coupled to the respiratory chain. The sequence is that of L-lactate dehydrogenase from Salmonella heidelberg (strain SL476).